A 96-amino-acid chain; its full sequence is Co-chaperonin GroES (96 aa).

The protein belongs to the GroES chaperonin family. Heptamer of 7 subunits arranged in a ring. Interacts with the chaperonin GroEL.

Its subcellular location is the cytoplasm. Together with the chaperonin GroEL, plays an essential role in assisting protein folding. The GroEL-GroES system forms a nano-cage that allows encapsulation of the non-native substrate proteins and provides a physical environment optimized to promote and accelerate protein folding. GroES binds to the apical surface of the GroEL ring, thereby capping the opening of the GroEL channel. In Alteromonas mediterranea (strain DSM 17117 / CIP 110805 / LMG 28347 / Deep ecotype), this protein is Co-chaperonin GroES.